Here is a 184-residue protein sequence, read N- to C-terminus: Thymidine kinase (184 aa).

Residues 10–17 (GPMYSGKT) and 83–86 (DEVQ) contribute to the ATP site. The active-site Proton acceptor is the glutamate 84. Residues cysteine 140, cysteine 143, cysteine 173, and cysteine 176 each coordinate Zn(2+).

Belongs to the thymidine kinase family. In terms of assembly, homotetramer.

The protein resides in the cytoplasm. It carries out the reaction thymidine + ATP = dTMP + ADP + H(+). The sequence is that of Thymidine kinase from Thermotoga petrophila (strain ATCC BAA-488 / DSM 13995 / JCM 10881 / RKU-1).